We begin with the raw amino-acid sequence, 207 residues long: uncharacterized protein (207 aa).

5 helical membrane passes run Ile-28–Val-48, Glu-59–Val-79, Met-112–Leu-132, Phe-140–Tyr-160, and Leu-165–Val-185.

Its subcellular location is the cell membrane. This is an uncharacterized protein from Bacillus subtilis (strain 168).